We begin with the raw amino-acid sequence, 196 residues long: ATP-dependent Clp protease proteolytic subunit (196 aa).

Ser-101 functions as the Nucleophile in the catalytic mechanism. His-126 is an active-site residue.

The protein belongs to the peptidase S14 family. In terms of assembly, component of the chloroplastic Clp protease core complex.

It is found in the plastid. Its subcellular location is the chloroplast stroma. It catalyses the reaction Hydrolysis of proteins to small peptides in the presence of ATP and magnesium. alpha-casein is the usual test substrate. In the absence of ATP, only oligopeptides shorter than five residues are hydrolyzed (such as succinyl-Leu-Tyr-|-NHMec, and Leu-Tyr-Leu-|-Tyr-Trp, in which cleavage of the -Tyr-|-Leu- and -Tyr-|-Trp bonds also occurs).. In terms of biological role, cleaves peptides in various proteins in a process that requires ATP hydrolysis. Has a chymotrypsin-like activity. Plays a major role in the degradation of misfolded proteins. This Vitis vinifera (Grape) protein is ATP-dependent Clp protease proteolytic subunit.